Here is a 501-residue protein sequence, read N- to C-terminus: Aldehyde dehydrogenase, cytosolic 1 (501 aa).

246 to 251 (GSTEVG) contributes to the NAD(+) binding site. Glutamate 269 (proton acceptor) is an active-site residue. The Nucleophile role is filled by cysteine 303.

The protein belongs to the aldehyde dehydrogenase family. Homotetramer. Eye specific, with very high expression in the lens.

The protein resides in the cytoplasm. The catalysed reaction is an aldehyde + NAD(+) + H2O = a carboxylate + NADH + 2 H(+). It participates in alcohol metabolism; ethanol degradation; acetate from ethanol: step 2/2. In terms of biological role, major component of the eye of elephant shrews, which in contrast to other mammals, possesses both a lens- and a non-lens class-1 aldehyde dehydrogenase 1. This eye-specific form is a structural protein of the lens and, in other part of the eye, serves as the major form of ALDH1. Can convert/oxidize retinaldehyde to retinoic acid. The chain is Aldehyde dehydrogenase, cytosolic 1 (ALDH1) from Macroscelides proboscideus (Short-eared elephant shrew).